We begin with the raw amino-acid sequence, 139 residues long: 3-hydroxyacyl-[acyl-carrier-protein] dehydratase FabZ (139 aa).

Histidine 46 is a catalytic residue.

This sequence belongs to the thioester dehydratase family. FabZ subfamily.

Its subcellular location is the cytoplasm. The catalysed reaction is a (3R)-hydroxyacyl-[ACP] = a (2E)-enoyl-[ACP] + H2O. Functionally, involved in unsaturated fatty acids biosynthesis. Catalyzes the dehydration of short chain beta-hydroxyacyl-ACPs and long chain saturated and unsaturated beta-hydroxyacyl-ACPs. The polypeptide is 3-hydroxyacyl-[acyl-carrier-protein] dehydratase FabZ (Petrotoga mobilis (strain DSM 10674 / SJ95)).